The sequence spans 232 residues: Thiamine import ATP-binding protein ThiQ (232 aa).

The ABC transporter domain maps to 2-230 (LKLTDITWLY…KASASAILGI (229 aa)). 32 to 39 (GPSGAGKS) is an ATP binding site.

Belongs to the ABC transporter superfamily. Thiamine importer (TC 3.A.1.19.1) family. In terms of assembly, the complex is composed of two ATP-binding proteins (ThiQ), two transmembrane proteins (ThiP) and a solute-binding protein (ThiB).

The protein localises to the cell inner membrane. It catalyses the reaction thiamine(out) + ATP + H2O = thiamine(in) + ADP + phosphate + H(+). In terms of biological role, part of the ABC transporter complex ThiBPQ involved in thiamine import. Responsible for energy coupling to the transport system. In Shigella boydii serotype 4 (strain Sb227), this protein is Thiamine import ATP-binding protein ThiQ.